A 1206-amino-acid chain; its full sequence is MIDVNNFEYMKIGLASPNKIRSWSRGEVKKPETINYRTLKPEKDGLFCERIFGPQKDWECHCGKYKRVRYKGVVCDRCGVEVTRAKVRRERMGHIELAAPVSHIWYFKGIPSRMGLVLDMSPRSLEEVIYFASYVVTDPGDTPLEKKQLLSEKEFRAYLDKYGRSFTAQMGAEAIRKLLMDIDLDKEVDGLKEELQTAQGQRRTRAIKRLEVLEAFRNSGNEPSWMILDVLPVIPPELRPMVQLDGGRFATSDLNDLYRRVINRNNRLKRLLDLGAPSIIVQNEKRMLQEAVDALIDNGRRGRPVTGPGNRPLKSLSHMLKGKQGRFRQNLLGKRVDYSGRSVIVVGPNLKMYQCGLPKEMALELFKPFVMKELVSKGLAHNIKSAKRKVERVQPEVWDVLEEVIKEHPVLLNRAPTLHRLGIQAFEPTLVEGRAIKLHPLVCTAYNADFDGDQMAVHVPLSAEAQAEARILMLAAQNILNPKDGKPVVTPSQDMVLGNYYLTMEREGAKGEGSVFKDTNEALIAYQNGYVHLHTRIAIPVASLGKTTFKEEQNSQLLLTTVGKLIFNEILPESFPYVNEPTAHNLEVETPSKYMVPTSTNVKELFQERDVVAPFKKGFLGNIIAEVFKKFKITETSKMLDRMKDLGFKYSTKAGITVGVADIVVLPEKKEILAEAEKKVDRVLKQFRRGLITEEERYDRVISIWSEAKDVIQDKLMGSLDKRNPIFMMSDSGARGNASNFTQLAGMRGLMANPSGRIIELPIKSSFREGLTVLEYFISTHGARKGLADTALKTADSGYLTRRLVDVAQDVIVREDDCGTDRGLEVEAIKEGNEIIEGLYDRLVGRVAFKTVRHPETGEPIVKKNELIHEDLAKQIVEAGVEQVTIRSVFTCDTRHGVCKKCYGRNLATGSDVEVGEAVGIIAAQSIGEPGTQLTMRTFHTGGVAGDDITQGLPRIQELFEARNPKGQAVITEIEGEVTNINEADKREITVKGEMETKTYSIPYGARIKVELGEQVVPGQSLTEGSIDPKELLKVQGMTGVQEYLLREVQKVYRMQGVEIGDKHVEVMVRQMLRKIRVIDAGDTEVLPGSLIEIQHFNDENKKVLLSGKRPATGRPVLLGITKASLETDSFLSAASFQETTRVLTDAAIKGKRDELVGLKENVIIGKLVPAGTGMNRYRNLDIVSDYDQQAVGTEEAVMEEAVTTE.

Zn(2+)-binding residues include Cys60, Cys62, Cys75, and Cys78. Positions 449, 451, and 453 each coordinate Mg(2+). Residues Cys818, Cys892, Cys899, and Cys902 each coordinate Zn(2+).

The protein belongs to the RNA polymerase beta' chain family. In terms of assembly, the RNAP catalytic core consists of 2 alpha, 1 beta, 1 beta' and 1 omega subunit. When a sigma factor is associated with the core the holoenzyme is formed, which can initiate transcription. Requires Mg(2+) as cofactor. Zn(2+) serves as cofactor.

It carries out the reaction RNA(n) + a ribonucleoside 5'-triphosphate = RNA(n+1) + diphosphate. Its function is as follows. DNA-dependent RNA polymerase catalyzes the transcription of DNA into RNA using the four ribonucleoside triphosphates as substrates. The sequence is that of DNA-directed RNA polymerase subunit beta' from Halalkalibacterium halodurans (strain ATCC BAA-125 / DSM 18197 / FERM 7344 / JCM 9153 / C-125) (Bacillus halodurans).